The primary structure comprises 276 residues: Elongation factor Ts, mitochondrial (276 aa).

Belongs to the EF-Ts family.

The protein resides in the mitochondrion. In terms of biological role, associates with the EF-Tu.GDP complex and induces the exchange of GDP to GTP. It remains bound to the aminoacyl-tRNA.EF-Tu.GTP complex up to the GTP hydrolysis stage on the ribosome. This is Elongation factor Ts, mitochondrial from Leishmania braziliensis.